Consider the following 344-residue polypeptide: MTQITLLTPDDWHLHFRDGDMLKETVPATARLFQRAIVMPNLLPPVTDAKMVIEYRERILAARPEGSDFEPLMTLFLTNDTTEQDIIDAKAAGVVAAKLYPAGATTNSDAAVKALDALFPIFEKMAEVGMLLLVHGEVTESHIDIFDREALFIERNLRRIVDAFPTLKVVFEHITTKEAADFVMSASDNVAATITPQHLLLNRNDLLVGGVRPHNFCLPVLKRNIHQEALRAAIATGSSKFFLGTDSAPHEKHRKESACGCAGCYSAWSALELYAQVFDDLGIIDKLEGFASIHGPDFYGLPRNTSTVTLVKEKWTVPSEIILPNGNPIVPFFAGEEVSWKVKS.

2 residues coordinate Zn(2+): histidine 13 and histidine 15. Substrate contacts are provided by residues 15 to 17 (HFR) and asparagine 41. Lysine 98, histidine 135, and histidine 173 together coordinate Zn(2+). The residue at position 98 (lysine 98) is an N6-carboxylysine. Histidine 135 is a binding site for substrate. Residue leucine 218 coordinates substrate. Residue aspartate 246 coordinates Zn(2+). Aspartate 246 is a catalytic residue. Positions 250 and 262 each coordinate substrate.

The protein belongs to the metallo-dependent hydrolases superfamily. DHOase family. Class II DHOase subfamily. In terms of assembly, homodimer. It depends on Zn(2+) as a cofactor.

It catalyses the reaction (S)-dihydroorotate + H2O = N-carbamoyl-L-aspartate + H(+). It participates in pyrimidine metabolism; UMP biosynthesis via de novo pathway; (S)-dihydroorotate from bicarbonate: step 3/3. In terms of biological role, catalyzes the reversible cyclization of carbamoyl aspartate to dihydroorotate. The chain is Dihydroorotase from Shewanella sediminis (strain HAW-EB3).